A 146-amino-acid polypeptide reads, in one-letter code: Hemoglobin subunit beta (146 aa).

Residue valine 1 is modified to N-acetylvaline. Residues 2–146 enclose the Globin domain; sequence HLTGEEKSAV…VANALAHKYH (145 aa). Residue threonine 12 is modified to Phosphothreonine. Serine 44 carries the phosphoserine modification. N6-acetyllysine is present on lysine 59. Histidine 63 contributes to the heme b binding site. N6-acetyllysine is present on lysine 82. Residue histidine 92 participates in heme b binding. Cysteine 93 carries the post-translational modification S-nitrosocysteine. The residue at position 144 (lysine 144) is an N6-acetyllysine.

This sequence belongs to the globin family. Heterotetramer of two alpha chains and two beta chains. In terms of tissue distribution, red blood cells.

Functionally, involved in oxygen transport from the lung to the various peripheral tissues. The polypeptide is Hemoglobin subunit beta (HBB) (Saguinus mystax (Moustached tamarin)).